Consider the following 224-residue polypeptide: Oxalate oxidase GF-3.8 (224 aa).

The signal sequence occupies residues 1–23; the sequence is MGYSKNIASGMFAMLLLASAVLS. Residues Cys-33 and Cys-49 are joined by a disulfide bond. In terms of domain architecture, Cupin type-1 spans 63-214; that stretch reads SKLAKAGNTS…ALRVEAGVVE (152 aa). 2 N-linked (GlcNAc...) asparagine glycosylation sites follow: Asn-70 and Asn-75. Residues His-111, His-113, Glu-118, and His-160 each contribute to the Mn(2+) site.

The protein belongs to the germin family. As to quaternary structure, oligomer (believed to be a pentamer but probably hexamer).

It localises to the secreted. Its subcellular location is the extracellular space. The protein localises to the apoplast. It is found in the cytoplasm. The protein resides in the cell wall. The enzyme catalyses oxalate + O2 + 2 H(+) = H2O2 + 2 CO2. Produces developmental and stress-related release of hydrogen peroxide in the apoplast. May play an important role in several aspects of plant growth and defense mechanisms. In Triticum aestivum (Wheat), this protein is Oxalate oxidase GF-3.8.